We begin with the raw amino-acid sequence, 355 residues long: uncharacterized protein (355 aa).

Catalysis depends on Cys-2, which acts as the For GATase activity. In terms of domain architecture, Glutamine amidotransferase type-2 spans 2 to 248; it reads CELLGICFNK…NGELMVFKNG (247 aa).

This is an uncharacterized protein from Methanocaldococcus jannaschii (strain ATCC 43067 / DSM 2661 / JAL-1 / JCM 10045 / NBRC 100440) (Methanococcus jannaschii).